A 230-amino-acid polypeptide reads, in one-letter code: Cytidylate kinase (230 aa).

12-20 (GPSGAGKGT) contacts ATP.

The protein belongs to the cytidylate kinase family. Type 1 subfamily.

The protein resides in the cytoplasm. The catalysed reaction is CMP + ATP = CDP + ADP. It catalyses the reaction dCMP + ATP = dCDP + ADP. The protein is Cytidylate kinase of Shewanella baltica (strain OS223).